The sequence spans 914 residues: Protein ECT2 (914 aa).

Alanine 2 bears the N-acetylalanine mark. BRCT domains follow at residues 171–260 (LYCT…AAVD) and 266–354 (FKVP…MYLY). Threonine 359 is modified (phosphothreonine; by PKC/PRKCI). Phosphoserine is present on residues serine 367 and serine 370. Threonine 373 carries the phosphothreonine; by CDK1 modification. Position 376 is a phosphoserine (serine 376). 2 consecutive short sequence motifs (nuclear localization signal) follow at residues 378–382 (RKRRR) and 401–405 (PRKRP). A disordered region spans residues 388-449 (AQLSRETDVS…SKSSTPVPSK (62 aa)). The segment covering 418–429 (DISNTPESSINY) has biased composition (polar residues). Low complexity predominate over residues 432–449 (TPKSCTKSSKSSTPVPSK). Position 444 is a phosphothreonine; by CDK1 (threonine 444). Positions 452-641 (ARWQVAKELY…KEVMTHINED (190 aa)) constitute a DH domain. A Glycyl lysine isopeptide (Lys-Gly) (interchain with G-Cter in SUMO2) cross-link involves residue lysine 611. Positions 675-794 (RVETISLGEH…KMLCRHVANT (120 aa)) constitute a PH domain. 2 positions are modified to phosphoserine: serine 716 and serine 842. Threonine 846 is modified (phosphothreonine; by CDK1). The interval 857–884 (TSHGSVEGRSPSSNDKHVMSRLSSTSSL) is disordered. A phosphoserine mark is found at serine 861 and serine 866.

In terms of assembly, homodimer. Homooligomer. Found in the centralspindlin complex. Interacts with NR1I3. Interacts (Thr-359 phosphorylated form) with PARD6A; the interaction is observed in cancer cells. Interacts (Thr-359 phosphorylated form) with PRKCI; the interaction is observed in cancer cells. Interacts with PKP4; the interaction is observed at the midbody. Interacts with RACGAP1/CYK4; the interaction is direct, occurs in a microtubule-dependent manner, occurs at anaphase and during cytokinesis, is inhibited in metaphase by phosphorylation of ECT2 on Thr-373 and is stimulated in early anaphase by dephosphorylation of ECT2 probably on Thr-373 through CDK1 activity. Interacts with PLK1; the interaction is stimulated upon its phosphorylation on Thr-444. Interacts with RHOA; the interaction results in allosteric activation of ECT2. Interacts with KIF23, PARD3, PARD6B and PRKCQ. Interacts with NEDD9/HEF1. In terms of processing, phosphorylated by PLK1 in vitro. Hyperphosphorylated during the G2 phase of the cell cycle. Phosphorylation at Thr-373 occurs during the G2/M phase, relieves its auto-inhibition status and stimulates its GEF activity. Phosphorylation at Thr-444 in G2/M phase is required for subsequent binding with PLK1 and Rho exchange activation. Dephosphorylated at the time of cytokinesis. Phosphorylation at Thr-359 is required for its transformation activity in cancer cells. As to expression, expressed in lung epithelial cells (at protein level). Expressed in squamous cell carcinoma, primary non-small cell lung cancer tumors and lung adenocarcinoma.

It is found in the nucleus. The protein resides in the cytoplasm. The protein localises to the cytoskeleton. It localises to the spindle. Its subcellular location is the cleavage furrow. It is found in the midbody. The protein resides in the cell junction. The protein localises to the tight junction. It localises to the microtubule organizing center. Its subcellular location is the centrosome. With respect to regulation, autoinhibited by the C-terminal PH domain which folds back and binds to the surface of the DH domain, blocking binding of RHOA to the catalytic center of the DH domain. The 2nd BRCT domain is also involved in inhibition, probably by helping to impede RHOA binding. Allosterically activated by binding of activated GTP-bound RHOA to the PH domain which stimulates the release of PH inhibition and promotes the binding of substrate RHOA to the catalytic center. Binding of phosphorylated RACGAP1 to the N-terminal BRCT domain-containing region also releases autoinhibition. Guanine nucleotide exchange factor (GEF) that catalyzes the exchange of GDP for GTP. Promotes guanine nucleotide exchange on the Rho family members of small GTPases, like RHOA, RHOC, RAC1 and CDC42. Required for signal transduction pathways involved in the regulation of cytokinesis. Component of the centralspindlin complex that serves as a microtubule-dependent and Rho-mediated signaling required for the myosin contractile ring formation during the cell cycle cytokinesis. Regulates the translocation of RHOA from the central spindle to the equatorial region. Plays a role in the control of mitotic spindle assembly; regulates the activation of CDC42 in metaphase for the process of spindle fibers attachment to kinetochores before chromosome congression. Involved in the regulation of epithelial cell polarity; participates in the formation of epithelial tight junctions in a polarity complex PARD3-PARD6-protein kinase PRKCQ-dependent manner. Plays a role in the regulation of neurite outgrowth. Inhibits phenobarbital (PB)-induced NR1I3 nuclear translocation. Stimulates the activity of RAC1 through its association with the oncogenic PARD6A-PRKCI complex in cancer cells, thereby acting to coordinately drive tumor cell proliferation and invasion. Also stimulates genotoxic stress-induced RHOB activity in breast cancer cells leading to their cell death. In Homo sapiens (Human), this protein is Protein ECT2.